The following is a 319-amino-acid chain: HPr kinase/phosphorylase (319 aa).

Catalysis depends on residues His137 and Lys158. 152–159 (GDSGVGKS) lines the ATP pocket. Mg(2+) is bound at residue Ser159. Asp176 acts as the Proton acceptor; for phosphorylation activity. Proton donor; for dephosphorylation activity in catalysis. Residues 201–210 (MEIRGLGIIN) form an important for the catalytic mechanism of both phosphorylation and dephosphorylation region. Mg(2+) is bound at residue Glu202. Arg243 is an active-site residue. Positions 264 to 269 (PVRPGR) are important for the catalytic mechanism of dephosphorylation.

The protein belongs to the HPrK/P family. In terms of assembly, homohexamer. The cofactor is Mg(2+).

The catalysed reaction is [HPr protein]-L-serine + ATP = [HPr protein]-O-phospho-L-serine + ADP + H(+). It carries out the reaction [HPr protein]-O-phospho-L-serine + phosphate + H(+) = [HPr protein]-L-serine + diphosphate. Its function is as follows. Catalyzes the ATP- as well as the pyrophosphate-dependent phosphorylation of a specific serine residue in HPr, a phosphocarrier protein of the phosphoenolpyruvate-dependent sugar phosphotransferase system (PTS). HprK/P also catalyzes the pyrophosphate-producing, inorganic phosphate-dependent dephosphorylation (phosphorolysis) of seryl-phosphorylated HPr (P-Ser-HPr). This Treponema pallidum (strain Nichols) protein is HPr kinase/phosphorylase (hprK).